The chain runs to 157 residues: Thioredoxin-T (157 aa).

The 106-residue stretch at 2–107 (VYPVRNKDDL…LAKLMEKHAG (106 aa)) folds into the Thioredoxin domain. A disulfide bridge connects residues C32 and C35. The interval 132 to 157 (ESSESDNDNNNVNEVSAHDENAVLEH) is disordered. Over residues 147-157 (SAHDENAVLEH) the composition is skewed to basic and acidic residues.

It belongs to the thioredoxin family. Testis specific. Not expressed in the embryo. Becomes progressively more strongly expressed during larval and pupal development. In testis, it is strongly expressed in young spermatocytes, and postmeiotic spermatid stages, then expression decreases at the nuclear elongation stage. Strongly expressed in the waste bag, in which material no longer needed for the mature sperm is eliminated. Not expressed in the stem cells and spermatogonial cells.

Its subcellular location is the nucleus. The protein resides in the chromosome. Functionally, probably participates in various redox reactions through the reversible oxidation of its active center dithiol to a disulfide and catalyzes dithiol-disulfide exchange reactions. Its tissue specificity suggests a regulatory role in the germline. This chain is Thioredoxin-T (TrxT), found in Drosophila melanogaster (Fruit fly).